We begin with the raw amino-acid sequence, 1165 residues long: Symplekin (1165 aa).

HEAT repeat units lie at residues 23–58 (TATARAKVVDWCNELVIASPSTKCELLAKVQETVLG), 61–95 (AELAEEFLESVLSLAHDSNMEVRKQVVAFVEQVCK), 98–140 (VELL…YLCS), 147–186 (SAEQAWNILSLIKAQILDMIDNENDGIRTNAIKFLEGVVV), and 218–257 (KLQEEGNNILDILLQFHGTTHISSVNLIACTSSLCTIAKM). Residues 365–384 (DQQQREMELDTEELERQKQK) are disordered. Positions 367–384 (QQREMELDTEELERQKQK) are enriched in basic and acidic residues.

The protein belongs to the Symplekin family. Interacts with Cpsf73 and Cpsf100 forming a core cleavage factor required for both polyadenylated and histone mRNA processing. Interacts with Slbp and Lsm11.

The protein localises to the nucleus. Its function is as follows. Component of a protein complex required for cotranscriptional processing of 3'-ends of polyadenylated and histone pre-mRNA. Involved in germline stem cell transit amplification, differentiation and mitosis-to-meiosis transition. This Drosophila melanogaster (Fruit fly) protein is Symplekin.